A 156-amino-acid polypeptide reads, in one-letter code: Ribonuclease H (156 aa).

One can recognise an RNase H type-1 domain in the interval 1-142 (MNKQVEIFTD…CDELARQAAE (142 aa)). Asp10, Glu48, Asp70, and Asp134 together coordinate Mg(2+). The disordered stretch occupies residues 135 to 156 (ELARQAAENPTEDDIGYQPEPQ).

It belongs to the RNase H family. In terms of assembly, monomer. It depends on Mg(2+) as a cofactor.

It localises to the cytoplasm. The catalysed reaction is Endonucleolytic cleavage to 5'-phosphomonoester.. Functionally, endonuclease that specifically degrades the RNA of RNA-DNA hybrids. This chain is Ribonuclease H, found in Vibrio cholerae serotype O1 (strain M66-2).